Consider the following 459-residue polypeptide: MTMLWLAVLLTCGAPAALLPTSGVGCPARCDPSSCSPAPTNCQSGETALRCGCCSVCAAAENERCGEGPEDPLCASGLRCVRNGGVTRCQCPSNQPVCGSDGKTYSSLCRLQAESKAVQGRGVAAIIPIQRGDCQQGQKDPDSPRYKYNFIADVVEKIAPAVVHIELFRILPFFKREVPAASGSGFIVSEDGLILTNAHVVTNKHRLKVERSDGSTYDAQIIDVDEKADIALIKIKAKGKLPVLLLGRSEELRPGEFVVAIGSPFSLQNTVTTGIVSTAQRGGKELGLRNSDMDYIQTDAIINYGNSGGPLVNLDGEVVGINTLKVTAGISFAIPSDKIRKFMAESHNRQSTGQGTKKKKYLGIRMMSLSQGKLKELKEQVKDFPENTSGAYIVEVLPDTPAEEAGLKEGDIIISISGKTVTSSSEVSEAIKKEGTLQMVIRRGNEDIPISVTPKEIEF.

The first 18 residues, 1 to 18 (MTMLWLAVLLTCGAPAAL), serve as a signal peptide directing secretion. An IGFBP N-terminal domain is found at 22–92 (SGVGCPARCD…NGGVTRCQCP (71 aa)). Cystine bridges form between Cys-26–Cys-51, Cys-30–Cys-53, Cys-35–Cys-54, Cys-42–Cys-57, Cys-65–Cys-80, Cys-74–Cys-89, Cys-91–Cys-109, and Cys-98–Cys-134. A Kazal-like domain is found at 74-136 (CASGLRCVRN…IPIQRGDCQQ (63 aa)). Residues 183 to 343 (GSGFIVSEDG…IPSDKIRKFM (161 aa)) are serine protease. Residues His-199, Asp-229, and Ser-307 each act as charge relay system in the active site. Positions 344–446 (AESHNRQSTG…LQMVIRRGNE (103 aa)) constitute a PDZ domain.

It belongs to the peptidase S1C family. Forms homotrimers. In the presence of substrate, may form higher-order multimers in a PDZ-independent manner.

It is found in the cell membrane. It localises to the secreted. The protein resides in the cytoplasm. The protein localises to the cytosol. Functionally, serine protease with a variety of targets, including extracellular matrix proteins and proteoglycans such as biglycan, syndecan-4 and glypican-4. Through cleavage of proteoglycans, may release soluble FGF-glycosaminoglycan complexes that promote the range and intensity of FGF signals in the extracellular space. Consequently, facilitates inductive processes in the developing embryo, such as posteriorization, mesoderm induction and neuronal differentiation. Regulates the availability of insulin-like growth factors (IGFs) by cleaving IGF-binding proteins. Inhibits signaling mediated by TGF-beta family members. Consequently, may regulate many physiological processes. Intracellularly, degrades TSC2, leading to the activation of TSC2 downstream targets. In Xenopus laevis (African clawed frog), this protein is Serine protease HTRA1 (htra1).